A 107-amino-acid chain; its full sequence is L-rhamnose mutarotase (107 aa).

Tyr-18 provides a ligand contact to substrate. His-22 (proton donor) is an active-site residue. Substrate contacts are provided by residues Tyr-41 and 76 to 77; that span reads WW.

The protein belongs to the rhamnose mutarotase family. In terms of assembly, homodimer.

The protein resides in the cytoplasm. It catalyses the reaction alpha-L-rhamnose = beta-L-rhamnose. Its pathway is carbohydrate metabolism; L-rhamnose metabolism. Its function is as follows. Involved in the anomeric conversion of L-rhamnose. This chain is L-rhamnose mutarotase, found in Paraburkholderia phytofirmans (strain DSM 17436 / LMG 22146 / PsJN) (Burkholderia phytofirmans).